Here is a 276-residue protein sequence, read N- to C-terminus: Shikimate dehydrogenase (NADP(+)) (276 aa).

Shikimate contacts are provided by residues 18 to 20 (SRS) and Thr65. The active-site Proton acceptor is the Lys69. The shikimate site is built by Asn90 and Asp106. Residues 132–136 (GAGGA) and Ile221 contribute to the NADP(+) site. Shikimate is bound at residue Tyr223. NADP(+) is bound at residue Gly244.

This sequence belongs to the shikimate dehydrogenase family. As to quaternary structure, homodimer.

It catalyses the reaction shikimate + NADP(+) = 3-dehydroshikimate + NADPH + H(+). It functions in the pathway metabolic intermediate biosynthesis; chorismate biosynthesis; chorismate from D-erythrose 4-phosphate and phosphoenolpyruvate: step 4/7. In terms of biological role, involved in the biosynthesis of the chorismate, which leads to the biosynthesis of aromatic amino acids. Catalyzes the reversible NADPH linked reduction of 3-dehydroshikimate (DHSA) to yield shikimate (SA). This Paramagnetospirillum magneticum (strain ATCC 700264 / AMB-1) (Magnetospirillum magneticum) protein is Shikimate dehydrogenase (NADP(+)).